We begin with the raw amino-acid sequence, 286 residues long: ATP phosphoribosyltransferase (286 aa).

It belongs to the ATP phosphoribosyltransferase family. Long subfamily. The cofactor is Mg(2+).

Its subcellular location is the cytoplasm. The catalysed reaction is 1-(5-phospho-beta-D-ribosyl)-ATP + diphosphate = 5-phospho-alpha-D-ribose 1-diphosphate + ATP. The protein operates within amino-acid biosynthesis; L-histidine biosynthesis; L-histidine from 5-phospho-alpha-D-ribose 1-diphosphate: step 1/9. Feedback inhibited by histidine. Its function is as follows. Catalyzes the condensation of ATP and 5-phosphoribose 1-diphosphate to form N'-(5'-phosphoribosyl)-ATP (PR-ATP). Has a crucial role in the pathway because the rate of histidine biosynthesis seems to be controlled primarily by regulation of HisG enzymatic activity. This chain is ATP phosphoribosyltransferase, found in Cytophaga hutchinsonii (strain ATCC 33406 / DSM 1761 / CIP 103989 / NBRC 15051 / NCIMB 9469 / D465).